Consider the following 126-residue polypeptide: Glycine cleavage system H protein (126 aa).

Positions 22–104 constitute a Lipoyl-binding domain; the sequence is IATVGITAFA…YGRGWLFKVE (83 aa). K63 bears the N6-lipoyllysine mark.

It belongs to the GcvH family. The glycine cleavage system is composed of four proteins: P, T, L and H. (R)-lipoate is required as a cofactor.

Its function is as follows. The glycine cleavage system catalyzes the degradation of glycine. The H protein shuttles the methylamine group of glycine from the P protein to the T protein. This chain is Glycine cleavage system H protein, found in Thermobifida fusca (strain YX).